Consider the following 659-residue polypeptide: Delta(6)-protoilludene synthase (659 aa).

Mg(2+) is bound by residues D91, N227, S231, and E235. Positions 91-95 (DEHTD) match the DDXXD motif motif. (2E,6E)-farnesyl diphosphate is bound by residues R316 and Y317. Residues 528–586 (PQFSKTSGAPNGAHTPTTTNGSIKSNGFVSGDTNGHANGNGHVQTRSSTPSSSSSSTSS) form a disordered region. The segment covering 530-573 (FSKTSGAPNGAHTPTTTNGSIKSNGFVSGDTNGHANGNGHVQTR) has biased composition (polar residues). Positions 574 to 586 (SSTPSSSSSSTSS) are enriched in low complexity.

The protein belongs to the terpene synthase family. Mg(2+) is required as a cofactor.

It catalyses the reaction (2E,6E)-farnesyl diphosphate = Delta(6)-protoilludene + diphosphate. Terpene cyclase that catalyzes the cyclization of farnesyl diphosphate (FPP) to delta(6)-protoilludene. The chain is Delta(6)-protoilludene synthase from Cyclocybe aegerita (Black poplar mushroom).